The following is a 179-amino-acid chain: Small ribosomal subunit protein uS5 (179 aa).

The S5 DRBM domain maps to 22 to 85 (MIEKLVAVNR…EYARKTMANV (64 aa)).

It belongs to the universal ribosomal protein uS5 family. As to quaternary structure, part of the 30S ribosomal subunit. Contacts proteins S4 and S8.

Its function is as follows. With S4 and S12 plays an important role in translational accuracy. In terms of biological role, located at the back of the 30S subunit body where it stabilizes the conformation of the head with respect to the body. The sequence is that of Small ribosomal subunit protein uS5 from Xylella fastidiosa (strain 9a5c).